The chain runs to 211 residues: Receptor expression-enhancing protein 6 (211 aa).

2 helical membrane-spanning segments follow: residues 44 to 64 and 89 to 109; these read LSLY…IGFV and WVVY…LSWF. The tract at residues 190–211 is disordered; that stretch reads AGPSTPLEADLKPSQTPQPKDK. A compositionally biased stretch (polar residues) spans 202 to 211; the sequence is PSQTPQPKDK.

This sequence belongs to the DP1 family. As to quaternary structure, interacts with STX3. Interacts with clathrin. In terms of tissue distribution, expressed in circumvallate papillae and testis. Expressed in the retina. Isoform 1 is predominantly present in mature optic cups. Isoform 1 expression is confined to the cell body and inner segment of developing rod photoreceptor cells.

The protein localises to the endoplasmic reticulum membrane. Its subcellular location is the cytoplasmic vesicle. It is found in the clathrin-coated vesicle membrane. Functionally, required for correct function and survival of retinal photoreceptors. Required for retinal development. In rod photoreceptors, facilitates stability and/or trafficking of guanylate cyclases and is required to maintain endoplasmic reticulum and mitochondrial homeostasis. May play a role in clathrin-coated intracellular vesicle trafficking of proteins from the endoplasmic reticulum to the retinal rod plasma membrane. The chain is Receptor expression-enhancing protein 6 (REEP6) from Homo sapiens (Human).